The chain runs to 447 residues: UPF0210 protein Ldb1026 (447 aa).

The protein belongs to the UPF0210 family. In terms of assembly, homodimer.

In Lactobacillus delbrueckii subsp. bulgaricus (strain ATCC 11842 / DSM 20081 / BCRC 10696 / JCM 1002 / NBRC 13953 / NCIMB 11778 / NCTC 12712 / WDCM 00102 / Lb 14), this protein is UPF0210 protein Ldb1026.